Reading from the N-terminus, the 148-residue chain is MKVILLQDVKKLGKKGDVINASDGYARNFLFPKKLAQEATDNNLHILNNKKENERRQKLAELEAAQALAADLKDKVIKIDGKAGDNGKLFGAITSKDVAGLIKKQFNVEVDKKKIVMDTIKIAGTYNIEVKLYPEVSTKMKVMVVPVQ.

This sequence belongs to the bacterial ribosomal protein bL9 family.

Binds to the 23S rRNA. The chain is Large ribosomal subunit protein bL9 from Clostridium perfringens (strain ATCC 13124 / DSM 756 / JCM 1290 / NCIMB 6125 / NCTC 8237 / Type A).